The following is a 1651-amino-acid chain: MEGMALYLVAALLIGFPGSSHGALYTLITPGVLRTDTEEQILVEAHGDSAPKQPVISIHDFPRRQKILFQIRVDMNPAGGMLVTPTIKIPAKELNKESRQNQYVVVKVSGLPLELEKVVLLSSQSGFVFIQTDKGIYTPGSLVRYRVFSMDYNMHRMDKTVIVEFQTPEGVVVSSNPINPSSVLIRHYNLSELVSFGTWKAVAKYEHSPEESYTAYFDVREYVLPSFEVRLQPSDKFLYIDGNKNFHVSITARYLYGKKVEGVAFVLFGVKIDDAKKSIPDSLTRIPIIDGDGEAILKRDILRSRFQNLNELVGHTLYASVTVMTESGSDMVVTEQSGIHIVTSPYQIYFTKPPKYFKPGMPYELTVYVTNPDGSPAANVPVVSEAIHSEGTTLSDGTAKLILNTPLNTQSLPITVRTNHRDLPRERQATKSMTATAYQTQGGSGNYLHVAITSTEIKAGDNLPVSFNVRGNANSLNQIKYFTYLILTKGKIFKVGRQPRGEGQNLVTMNLRITPDLIPAFRFVAYYQVGNNEIVADSVWVDVKDTCMGMLVVKGASSRDNRIQKPGAAMKIKLEGDPGARVGLVAVDKAVYVLNDKYKISQAKIWDTIEKSDFGCTAGGGQDNLGVFEDAGLALTTSTNLNTKQRSVATCPQPTNRRRRSSVLLLDSKASKAAQFQEQNLHKCCEDGMHENPMGYTCEKRAKYTQEGDACKAAFLECCRYIKGIRDENQRESELFLARSDFEDEFFEEDNIISRSDFPDSWLWLTEDLNEPPNSQGISSKTLSFYLKDSITTWEVLAVSIAPTKGICVAEPYEITVMKDFFIDLRVPYSVVKNEQVEIRAVLYNYADEDIYVRVELLYNPAFCSASAEGQRYRVQVPVRALSSWAVPFVIVPLEQGLHDVEVKASVRGELASDGVRKKLKVVPEGERKNIVTVIELDPSVKGVGGTQEQTVVANKLDDKVPETEIETKFSVLGDPVAQIIENSIDGSKLSHLIITPSGSGEQNMITMTPSVIATYYLDATGQWENLGVDRRTEAVKQIMKGYAQQMVYKKADHSYASFVNRASSSWLTAYVVKVFAMAAKMVKDINHEIICGGVKWLILNRQQSDGVFKENAPVILGGMMGGTQGAEPEVSLTAFILVALLESRSVCNEHINILDNSINKATDYLLKKYEKLQRPYTTALTAYALAAAERLNDDRVLMAASTGRDRWEEHARTHNIEGTSYALLALLKMKKFAEAGPVVKWLIDQKYYGGTYGQTQATVMVFQALAEYEIQIPTHKDLNLNISINLPEREVPLRYSINYGNALVARTAETKLNEDFTVSASGDGKATMTILTVYNAQLREDANVCNKFHLNVSVENAQLNSKQAKGAKDTLRLKICTRYLGEVDSTMTIIDVSMLTGFLPDTEDLTRLSKGVDRYISKFEIDNNMVQKGTVVIYLDKVSHSEVECLNFKIHKHFEVGFIQPGPVKVYSYYNLDEQCTKFYHPDKGTGLLNKICHGNICRCAEQSCSLLNQQKKIDLPLRIQKACAPNVDYVYKAKLLRIEEKDGNDIYVMDVLEVIKGGTDRNPQAKARQYVSQRKCQEALNLNLNNDYLIWGLSSDLWPMKNDISYLITKNTWIERWPNEDECQDEEFQNLCDDFAQLSNTLTIFGCPT.

Residues 1-22 form the signal peptide; sequence MEGMALYLVAALLIGFPGSSHG. A glycan (N-linked (GlcNAc...) asparagine) is linked at Asn-189. Positions 519, 542, 543, and 545 each coordinate Mg(2+). Disulfide bonds link Cys-547/Cys-808, Cys-616/Cys-651, Cys-684/Cys-711, Cys-685/Cys-718, Cys-698/Cys-719, Cys-864/Cys-1501, Cys-1346/Cys-1477, Cys-1377/Cys-1446, Cys-1494/Cys-1499, Cys-1506/Cys-1578, Cys-1525/Cys-1649, and Cys-1625/Cys-1634. Residues 657-739 constitute a propeptide that is removed on maturation; the sequence is RRRRSSVLLL…QRESELFLAR (83 aa). The tract at residues 661-739 is C3a-like domain; sequence SSVLLLDSKA…QRESELFLAR (79 aa). The Anaphylatoxin-like domain occupies 684 to 719; that stretch reads CCEDGMHENPMGYTCEKRAKYTQEGDACKAAFLECC. Positions 743–754 are factor B binding site; that stretch reads EDEFFEEDNIIS. Residues 992 to 1269 constitute a propeptide that is removed on maturation; it reads HLIITPSGSG…VMVFQALAEY (278 aa). Residues 992 to 1269 form a C3d-like domain region; sequence HLIITPSGSG…VMVFQALAEY (278 aa). The interval 1197 to 1259 is factor H binding site; the sequence is VLMAASTGRD…GGTYGQTQAT (63 aa). N-linked (GlcNAc...) asparagine glycans are attached at residues Asn-1282 and Asn-1352. The NTR domain occupies 1506–1649; it reads CSLLNQQKKI…LSNTLTIFGC (144 aa).

The protein belongs to the venom complement C3 homolog family. Heterotrimer of alpha, beta and gamma chains; disulfide-linked. Is active with factor B in the presence of factor D. First processed by the removal of 4 Arg residues by furin-type protease, forming two chains, alpha and gamma/beta precursor, linked by a disulfide bond. This mature AVF is composed of three chains: alpha, gamma and beta. As to expression, expressed by the venom gland.

It is found in the secreted. Functionally, complement-activating protein in snake venom. It is a structural and functional analog of complement component C3b, the activated form of C3. It binds factor B (CFB), which is subsequently cleaved by factor D (CFD) to form the bimolecular complex AVF/Bb. AVF/Bb is a C3 convertase that cleaves complement component C3, but not C5 (as do CVF/Bb). This chain is A.superbus venom factor 2, found in Austrelaps superbus (Lowland copperhead snake).